A 359-amino-acid chain; its full sequence is MAEPARALRVVRIYLDGAHGLGKTTTGRALAAASTAGEGVLFFPEPMAYWRTMFVTDALSGILAASARCAAASHGSARGAGGPAHRADADAAGLVAYYQARFAAPYLILHARVSALLAPPGPAPGGTVTLVFDRHPVAACLCYPFARYCLREINAEDLLMLAAAMPPEAPGANLVVCTLPPAEQQRRLAARARPGDRADAGFLVAVRNAYALLVNTCAFLRAGGAWRDGWDALEWADANALAALADPSCDECKMAPAPALRDTLFAALKCRELYPGGGAGLPAVHAWALDALAGRLAALEVFVLDVSAAPDACAAAVLDMRPAMQAACADGAAGATLATLARQFALEMAGEATAGPRGL.

Residue 17–24 coordinates ATP; sequence GAHGLGKT. The active-site Proton acceptor is glutamate 45. Residue glutamine 99 coordinates substrate. Arginine 187 is an ATP binding site. Arginine 193 is a binding site for substrate.

This sequence belongs to the herpesviridae thymidine kinase family. Homodimer.

It carries out the reaction thymidine + ATP = dTMP + ADP + H(+). Catalyzes the transfer of the gamma-phospho group of ATP to thymidine to generate dTMP in the salvage pathway of pyrimidine synthesis. The dTMP serves as a substrate for DNA polymerase during viral DNA replication. Allows the virus to be reactivated and to grow in non-proliferative cells lacking a high concentration of phosphorylated nucleic acid precursors. This chain is Thymidine kinase, found in Bos taurus (Bovine).